Here is a 137-residue protein sequence, read N- to C-terminus: Large ribosomal subunit protein uL16 (137 aa).

This sequence belongs to the universal ribosomal protein uL16 family. Part of the 50S ribosomal subunit.

Binds 23S rRNA and is also seen to make contacts with the A and possibly P site tRNAs. This Lactococcus lactis subsp. cremoris (strain SK11) protein is Large ribosomal subunit protein uL16.